We begin with the raw amino-acid sequence, 562 residues long: UPF0649 protein C1442.02 (562 aa).

2 positions are modified to phosphoserine: serine 285 and serine 286. Residues 288 to 308 (DEEIAKNADVPAEVDNNSTKA) form a disordered region.

Belongs to the UPF0649 family.

The protein resides in the cytoplasm. It localises to the nucleus. In Schizosaccharomyces pombe (strain 972 / ATCC 24843) (Fission yeast), this protein is UPF0649 protein C1442.02.